The chain runs to 449 residues: 23S rRNA (uracil(1939)-C(5))-methyltransferase RlmD (449 aa).

One can recognise a TRAM domain in the interval 1–66 (MGRSRYHNKL…AKFDEAKVVE (66 aa)). Cys79, Cys85, Cys88, and Cys169 together coordinate [4Fe-4S] cluster. Residues Gln280, Phe309, Asn314, Glu330, Asn357, and Asp379 each coordinate S-adenosyl-L-methionine. Residue Cys405 is the Nucleophile of the active site.

Belongs to the class I-like SAM-binding methyltransferase superfamily. RNA M5U methyltransferase family. RlmD subfamily.

It catalyses the reaction uridine(1939) in 23S rRNA + S-adenosyl-L-methionine = 5-methyluridine(1939) in 23S rRNA + S-adenosyl-L-homocysteine + H(+). Catalyzes the formation of 5-methyl-uridine at position 1939 (m5U1939) in 23S rRNA. This Francisella tularensis subsp. holarctica (strain LVS) protein is 23S rRNA (uracil(1939)-C(5))-methyltransferase RlmD.